The primary structure comprises 309 residues: Glutaminase (309 aa).

Substrate is bound by residues serine 64, asparagine 114, glutamate 160, asparagine 167, tyrosine 191, tyrosine 243, and valine 261.

This sequence belongs to the glutaminase family. Homotetramer.

The enzyme catalyses L-glutamine + H2O = L-glutamate + NH4(+). This is Glutaminase from Methylorubrum extorquens (strain CM4 / NCIMB 13688) (Methylobacterium extorquens).